Here is a 487-residue protein sequence, read N- to C-terminus: ATP synthase subunit beta 1 (487 aa).

Residue 162-169 (GGAGVGKT) participates in ATP binding.

This sequence belongs to the ATPase alpha/beta chains family. As to quaternary structure, F-type ATPases have 2 components, CF(1) - the catalytic core - and CF(0) - the membrane proton channel. CF(1) has five subunits: alpha(3), beta(3), gamma(1), delta(1), epsilon(1). CF(0) has three main subunits: a(1), b(2) and c(9-12). The alpha and beta chains form an alternating ring which encloses part of the gamma chain. CF(1) is attached to CF(0) by a central stalk formed by the gamma and epsilon chains, while a peripheral stalk is formed by the delta and b chains.

It localises to the cell inner membrane. The catalysed reaction is ATP + H2O + 4 H(+)(in) = ADP + phosphate + 5 H(+)(out). In terms of biological role, produces ATP from ADP in the presence of a proton gradient across the membrane. The catalytic sites are hosted primarily by the beta subunits. The chain is ATP synthase subunit beta 1 from Gluconobacter oxydans (strain 621H) (Gluconobacter suboxydans).